The following is a 127-amino-acid chain: Aspartate 1-decarboxylase (127 aa).

Ser25 functions as the Schiff-base intermediate with substrate; via pyruvic acid in the catalytic mechanism. Ser25 carries the post-translational modification Pyruvic acid (Ser). Thr57 provides a ligand contact to substrate. Residue Tyr58 is the Proton donor of the active site. Gly73–Ala75 is a binding site for substrate.

The protein belongs to the PanD family. In terms of assembly, heterooctamer of four alpha and four beta subunits. It depends on pyruvate as a cofactor. Is synthesized initially as an inactive proenzyme, which is activated by self-cleavage at a specific serine bond to produce a beta-subunit with a hydroxyl group at its C-terminus and an alpha-subunit with a pyruvoyl group at its N-terminus.

The protein localises to the cytoplasm. It catalyses the reaction L-aspartate + H(+) = beta-alanine + CO2. Its pathway is cofactor biosynthesis; (R)-pantothenate biosynthesis; beta-alanine from L-aspartate: step 1/1. Functionally, catalyzes the pyruvoyl-dependent decarboxylation of aspartate to produce beta-alanine. The polypeptide is Aspartate 1-decarboxylase (Carboxydothermus hydrogenoformans (strain ATCC BAA-161 / DSM 6008 / Z-2901)).